Here is an 880-residue protein sequence, read N- to C-terminus: A-adding tRNA nucleotidyltransferase (880 aa).

2 consecutive CBS domains span residues 315–373 and 377–435; these read MSSP…NLPV and MHTE…RNAE. 487-490 contacts ATP; it reads GFVR. 2 residues coordinate Mg(2+): Asp-500 and Asp-502. Residues 574–575, Asn-579, 619–628, Arg-632, and Arg-661 each bind ATP; these read RD and DPTRVFRAIR.

It belongs to the tRNA nucleotidyltransferase/poly(A) polymerase family. Mg(2+) serves as cofactor.

The catalysed reaction is a tRNA with a 3' CC end + ATP = a tRNA with a 3' CCA end + diphosphate. Functionally, tRNA nucleotidyltransferase involved in the synthesis of the tRNA CCA terminus. Adds the terminal adenosine residue to tRNA. This Geobacter sulfurreducens (strain ATCC 51573 / DSM 12127 / PCA) protein is A-adding tRNA nucleotidyltransferase.